Reading from the N-terminus, the 103-residue chain is uncharacterized protein (103 aa).

Positions 1-21 (MTGFKVSSFFYILALSRFFNA) are cleaved as a signal peptide.

This is an uncharacterized protein from Saccharomyces cerevisiae (strain ATCC 204508 / S288c) (Baker's yeast).